The primary structure comprises 415 residues: Levansucrase LscA (415 aa).

The sucrose site is built by tryptophan 45, aspartate 46, alanine 132, arginine 202, and aspartate 203. Catalysis depends on aspartate 46, which acts as the Nucleophile. Glutamate 287 functions as the Proton donor/acceptor in the catalytic mechanism.

This sequence belongs to the glycosyl hydrolase 68 family.

It is found in the periplasm. It carries out the reaction [6)-beta-D-fructofuranosyl-(2-&gt;](n) alpha-D-glucopyranoside + sucrose = [6)-beta-D-fructofuranosyl-(2-&gt;](n+1) alpha-D-glucopyranoside + D-glucose. Its function is as follows. Catalyzes the synthesis of levan, a fructose polymer, by transferring the fructosyl moiety from sucrose to a growing acceptor molecule. LscA encodes a functional enzyme in vitro, when expressed in E.coli under control of the vector-based lactose promoter (Plac), and it can restore levan production to the lscB-lscC double mutant. However, lscA is not expressed in P.savastanoi pv. glycinea PG4180 under standard conditions. It could be an ancestral Lsc variant in P.syringae. The sequence is that of Levansucrase LscA from Pseudomonas savastanoi pv. glycinea (Pseudomonas syringae pv. glycinea).